The primary structure comprises 480 residues: Ribosomal protein uS12 methylthiotransferase RimO (480 aa).

Positions 14-135 (LSVAMVTLGC…IAARLRSIVA (122 aa)) constitute an MTTase N-terminal domain. 6 residues coordinate [4Fe-4S] cluster: Cys23, Cys59, Cys98, Cys193, Cys197, and Cys200. Positions 179–410 (LDDGPTAALK…DLVEELTSQR (232 aa)) constitute a Radical SAM core domain. The 69-residue stretch at 412 to 480 (AERLGEQVEV…EGADLDARPL (69 aa)) folds into the TRAM domain.

Belongs to the methylthiotransferase family. RimO subfamily. It depends on [4Fe-4S] cluster as a cofactor.

The protein resides in the cytoplasm. It catalyses the reaction L-aspartate(89)-[ribosomal protein uS12]-hydrogen + (sulfur carrier)-SH + AH2 + 2 S-adenosyl-L-methionine = 3-methylsulfanyl-L-aspartate(89)-[ribosomal protein uS12]-hydrogen + (sulfur carrier)-H + 5'-deoxyadenosine + L-methionine + A + S-adenosyl-L-homocysteine + 2 H(+). In terms of biological role, catalyzes the methylthiolation of an aspartic acid residue of ribosomal protein uS12. This is Ribosomal protein uS12 methylthiotransferase RimO from Nocardioides sp. (strain ATCC BAA-499 / JS614).